The chain runs to 664 residues: Ubiquinol oxidase subunit 1 (664 aa).

The next 2 membrane-spanning stretches (helical) occupy residues 15–35 (PILVGTFIGVVIVGVAVLGLI) and 57–77 (LAAMYIILALVALFRGFADAI). His106 lines the heme b pocket. The next 12 membrane-spanning stretches (helical) occupy residues 109–129 (IMIFFLAMAFMTGLFNFIVPL), 136–156 (VAFPFLNNLSFWMTAVAFILV), 190–210 (YIWAVQISGVGTLLTGVNFFV), 233–253 (LCASILIMVAFPVLTVAVGLL), 278–298 (LIWAWGHPEVYILVIPAFGVF), 316–336 (MVYATCSIMVLSFLVWVHHFF), 347–367 (FFGIATMIISIPTGIKLFNWL), 383–403 (WAVGFMITFTIGGMTGVMLAI), 414–434 (LFLIAHFHNTIIGGVYFGYIC), 456–476 (AFWFWFVGFYCAFVPLYIVGF), 490–510 (AWHPWLLVAEVGAVLVMLGIA), and 603–623 (ALIFGFAAVWYIWWLAAVGLV). Cu cation-binding residues include His284, Tyr288, His333, and His334. The 1'-histidyl-3'-tyrosine (His-Tyr) cross-link spans 284–288 (HPEVY). Position 419 (His419) interacts with Fe(II)-heme a. Residue His421 coordinates heme b.

This sequence belongs to the heme-copper respiratory oxidase family. In terms of assembly, heterotetramer of the subunits 1, 2, 3 and 4.

The protein resides in the cell membrane. Its function is as follows. Catalytic subunit of the enzyme. Electrons originating in a quinol are transferred to the bimetallic center formed by heme a and copper B. The protein is Ubiquinol oxidase subunit 1 (cyaA) of Acetobacter aceti.